A 186-amino-acid polypeptide reads, in one-letter code: dCTP deaminase (186 aa).

A dCTP-binding site is contributed by Lys107 to Arg112. Catalysis depends on Glu133, which acts as the Proton donor/acceptor. Gln152, Tyr166, and Gln176 together coordinate dCTP.

It belongs to the dCTP deaminase family. As to quaternary structure, homotrimer.

It carries out the reaction dCTP + H2O + H(+) = dUTP + NH4(+). Its pathway is pyrimidine metabolism; dUMP biosynthesis; dUMP from dCTP (dUTP route): step 1/2. In terms of biological role, catalyzes the deamination of dCTP to dUTP. The polypeptide is dCTP deaminase (Campylobacter jejuni subsp. doylei (strain ATCC BAA-1458 / RM4099 / 269.97)).